A 185-amino-acid chain; its full sequence is Ribosome-recycling factor (185 aa).

The protein belongs to the RRF family.

Its subcellular location is the cytoplasm. Functionally, responsible for the release of ribosomes from messenger RNA at the termination of protein biosynthesis. May increase the efficiency of translation by recycling ribosomes from one round of translation to another. The chain is Ribosome-recycling factor from Photobacterium profundum (strain SS9).